The chain runs to 1515 residues: Lysophospholipase nte1 (1515 aa).

Topologically, residues 1–59 are cytoplasmic; that stretch reads MESLSNLGNAMSSVLSETTSTTATAILADPTEALSSVVALASDAVSKATSDVVPEHTPT. A helical transmembrane segment spans residues 60 to 80; it reads SWFTIILWLLHRISSVLYFVI. At 81–102 the chain is on the lumenal side; sequence KLTTITTPTFLFNIFSTSLTVT. A helical transmembrane segment spans residues 103 to 123; that stretch reads MNATTLVLIMLFMMAGVTWVV. The Cytoplasmic portion of the chain corresponds to 124-1515; that stretch reads RYRYLNMYSR…RTMAPRRASI (1392 aa). 3 disordered regions span residues 278-303, 519-580, and 617-639; these read MHDTDDDDSPDPTPSAPGTAMPGYPM, VTAT…TPRN, and VNPDSTQASPRFVPTDQRRSRGG. Composition is skewed to polar residues over residues 543 to 554 and 566 to 579; these read LTNTQQLKSGPA and PRPQRNLSPFSTPR. Residues 670-789 and 835-955 contribute to the a nucleoside 3',5'-cyclic phosphate site; these read SPVP…LAGY and RLTE…IAAR. Positions 1212-1376 constitute a PNPLA domain; it reads LVLGGGGARG…IDNLTVSRMK (165 aa). The GXGXXG motif lies at 1216–1221; sequence GGGARG. A GXSXG motif is present at residues 1243–1247; it reads GTSIG. Serine 1245 (nucleophile) is an active-site residue. Aspartate 1363 (proton acceptor) is an active-site residue. The short motif at 1363–1365 is the DGA/G element; that stretch reads DGG.

Belongs to the NTE family.

The protein resides in the endoplasmic reticulum membrane. It catalyses the reaction a 1-acyl-sn-glycero-3-phosphocholine + H2O = sn-glycerol 3-phosphocholine + a fatty acid + H(+). Inhibited by organophosphorus esters. Its function is as follows. Intracellular phospholipase B that catalyzes the double deacylation of phosphatidylcholine (PC) to glycerophosphocholine (GroPCho). Plays an important role in membrane lipid homeostasis. Responsible for the rapid PC turnover in response to inositol, elevated temperatures, or when choline is present in the growth medium. This is Lysophospholipase nte1 (nte1) from Neurospora crassa (strain ATCC 24698 / 74-OR23-1A / CBS 708.71 / DSM 1257 / FGSC 987).